Consider the following 204-residue polypeptide: Thymidylate kinase (204 aa).

ATP is bound at residue 9–16 (GIEASGKT).

This sequence belongs to the thymidylate kinase family.

It carries out the reaction dTMP + ATP = dTDP + ADP. Functionally, phosphorylation of dTMP to form dTDP in both de novo and salvage pathways of dTTP synthesis. The protein is Thymidylate kinase of Sulfurihydrogenibium sp. (strain YO3AOP1).